The primary structure comprises 81 residues: ATP synthase subunit c, chloroplastic (81 aa).

2 helical membrane passes run 3-23 and 57-77; these read PLIS…ASIG and LAFM…LLFA.

The protein belongs to the ATPase C chain family. As to quaternary structure, F-type ATPases have 2 components, F(1) - the catalytic core - and F(0) - the membrane proton channel. F(1) has five subunits: alpha(3), beta(3), gamma(1), delta(1), epsilon(1). F(0) has four main subunits: a(1), b(1), b'(1) and c(10-14). The alpha and beta chains form an alternating ring which encloses part of the gamma chain. F(1) is attached to F(0) by a central stalk formed by the gamma and epsilon chains, while a peripheral stalk is formed by the delta, b and b' chains.

The protein localises to the plastid. The protein resides in the chloroplast thylakoid membrane. Its function is as follows. F(1)F(0) ATP synthase produces ATP from ADP in the presence of a proton or sodium gradient. F-type ATPases consist of two structural domains, F(1) containing the extramembraneous catalytic core and F(0) containing the membrane proton channel, linked together by a central stalk and a peripheral stalk. During catalysis, ATP synthesis in the catalytic domain of F(1) is coupled via a rotary mechanism of the central stalk subunits to proton translocation. Functionally, key component of the F(0) channel; it plays a direct role in translocation across the membrane. A homomeric c-ring of between 10-14 subunits forms the central stalk rotor element with the F(1) delta and epsilon subunits. The protein is ATP synthase subunit c, chloroplastic of Gossypium barbadense (Sea Island cotton).